Consider the following 467-residue polypeptide: Glutamyl-tRNA reductase (467 aa).

Substrate contacts are provided by residues 49–52, S109, 114–116, and Q120; these read TCNR and EQQ. C50 serves as the catalytic Nucleophile. NADP(+) is bound at residue 189 to 194; sequence GAGAMG. Positions 446–467 are disordered; the sequence is GFSDTTRYGTSPAQSSSKYHAE. The span at 447 to 467 shows a compositional bias: polar residues; that stretch reads FSDTTRYGTSPAQSSSKYHAE.

Belongs to the glutamyl-tRNA reductase family. In terms of assembly, homodimer.

The catalysed reaction is (S)-4-amino-5-oxopentanoate + tRNA(Glu) + NADP(+) = L-glutamyl-tRNA(Glu) + NADPH + H(+). It participates in porphyrin-containing compound metabolism; protoporphyrin-IX biosynthesis; 5-aminolevulinate from L-glutamyl-tRNA(Glu): step 1/2. Catalyzes the NADPH-dependent reduction of glutamyl-tRNA(Glu) to glutamate 1-semialdehyde (GSA). In Mycobacterium leprae (strain TN), this protein is Glutamyl-tRNA reductase.